We begin with the raw amino-acid sequence, 160 residues long: Protein cornichon homolog 3 (160 aa).

The Cytoplasmic portion of the chain corresponds to methionine 1–tyrosine 10. A helical transmembrane segment spans residues methionine 11 to phenylalanine 31. Residues aspartate 32–tyrosine 72 are Lumenal-facing. Residues serine 73 to leucine 93 traverse the membrane as a helical segment. At asparagine 94–lysine 138 the chain is on the cytoplasmic side. A helical membrane pass occupies residues leucine 139–serine 159. Position 160 (serine 160) is a topological domain, lumenal.

The protein belongs to the cornichon family. Acts as an auxiliary subunit for AMPA-selective glutamate receptors (AMPARs). Found in a complex with GRIA1, GRIA2, GRIA3, GRIA4, CNIH2, CACNG2, CACNG3, CACNG4, CACNG5, CACNG7 and CACNG8. Brain. Expressed in the neocortex, hippocampal formation, and cerebellum (at protein level).

It localises to the postsynaptic cell membrane. Functionally, regulates the trafficking and gating properties of AMPA-selective glutamate receptors (AMPARs). Promotes their targeting to the cell membrane and synapses and modulates their gating properties by regulating their rates of activation, deactivation and desensitization. The chain is Protein cornichon homolog 3 (Cnih3) from Rattus norvegicus (Rat).